Reading from the N-terminus, the 563-residue chain is Zinc finger CCHC domain-containing protein 7 (563 aa).

Disordered regions lie at residues 41-64 (SQNL…VPGA) and 133-157 (SHST…QNSS). The span at 133–142 (SHSTPKVSAP) shows a compositional bias: polar residues. The span at 143-157 (QSNNFKSQKSCQNSS) shows a compositional bias: low complexity. CCHC-type zinc fingers lie at residues 265-282 (VVCR…NCPV), 287-304 (PACC…SCPS), 305-322 (RYCL…ECIE), 328-345 (KTCH…ACPE), and 372-389 (VYCC…ECKE). The tract at residues 443 to 494 (KVDAKPPAKKRKKKHPSKKERKGTIRDYECAETKQKKKHKKRKSGLQEIEGD) is disordered. Basic residues predominate over residues 449 to 463 (PAKKRKKKHPSKKER). Residues 464 to 476 (KGTIRDYECAETK) are compositionally biased toward basic and acidic residues. The segment covering 477–486 (QKKKHKKRKS) has biased composition (basic residues).

As to quaternary structure, component of a nucleolar TRAMP-like complex, an ATP-dependent exosome regulatory complex consisting of a helicase (MTREX), an oligadenylate polymerase (PAPD5 or PAPD7), and a substrate specific RNA-binding factor (ZCCHC7 or ZCCHC8). Several TRAMP-like complexes exist with specific compositions and are associated with nuclear, or nucleolar RNA exosomes.

It is found in the nucleus. The protein localises to the nucleolus. The polypeptide is Zinc finger CCHC domain-containing protein 7 (zcchc7) (Xenopus laevis (African clawed frog)).